Consider the following 230-residue polypeptide: MPIIKSSRVNIGRFTIGGSIPIVIISIFDHDAKSLTEKFETKKLSDKNLYEIRFDLFDKVNIDEELEIIRALDEMDIDYIFTYRGHDPEKIYETAITKMVPAVDMDLSLLNKVNRRSPDTRIMVSYHTDSSKDMIEKLDEMLKANADIVKVACNYKDEKNFFKDLIEIAQRKEISGKPVLFIPMGKSFLRVISAYYVSDMVYAKYDKETAMGQPDPDYYNKAFSLFNYIG.

Residues Ser26, 51–53 (EIR), and Arg84 each bind 3-dehydroquinate. Catalysis depends on His127, which acts as the Proton donor/acceptor. The active-site Schiff-base intermediate with substrate is Lys150. Residues Arg190, Thr209, and Gln213 each coordinate 3-dehydroquinate.

It belongs to the type-I 3-dehydroquinase family. As to quaternary structure, homodimer.

The catalysed reaction is 3-dehydroquinate = 3-dehydroshikimate + H2O. It participates in metabolic intermediate biosynthesis; chorismate biosynthesis; chorismate from D-erythrose 4-phosphate and phosphoenolpyruvate: step 3/7. In terms of biological role, involved in the third step of the chorismate pathway, which leads to the biosynthesis of aromatic amino acids. Catalyzes the cis-dehydration of 3-dehydroquinate (DHQ) and introduces the first double bond of the aromatic ring to yield 3-dehydroshikimate. This chain is 3-dehydroquinate dehydratase, found in Thermoplasma volcanium (strain ATCC 51530 / DSM 4299 / JCM 9571 / NBRC 15438 / GSS1).